The chain runs to 489 residues: Aerolysin (489 aa).

An N-terminal signal peptide occupies residues 1–24 (MMNRIITANLANLASSLMLAQVLG). Cystine bridges form between Cys-44-Cys-100 and Cys-184-Cys-189. The tract at residues 70–86 (WQITGLADRWVIMGPGY) is interaction with host N-linked glycan. Residues 257–289 (YSLSEKVTTKNKFQWPLVGETELAIEIAASQSW) form a part of the transmembrane beta-barrel after proteolytic activation of the toxin and insertion into the host membrane region. The interval 347 to 356 (RWGGNAWYTH) is interaction with glycans from host GPI-anchor. A propeptide spanning residues 445 to 489 (TRSAKAAQLRSASAEEVALTSVDLDSEALANEGFGNVSLTIVPVQ) is cleaved from the precursor.

Belongs to the aerolysin family. In terms of assembly, homodimer in solution; homoheptamer in the host membrane. After binding to GPI-anchored proteins in target membranes and proteolytic removal of the C-terminal propeptide, the protein assembles into a heptameric pre-pore complex. A further conformation change leads to insertion into the host membrane. In terms of processing, proteolytic cleavage and subsequent release of the propeptide trigger a major conformation change, leading to the formation of a heptameric pre-pore that then inserts into the host membrane.

It is found in the secreted. Its subcellular location is the host cell membrane. Secreted, cytolytic toxin that forms pores in host membranes after proteolytic removal of a C-terminal propeptide, leading to destruction of the membrane permeability barrier and cell death. The pores are formed by transmembrane beta-strands and are approximately 3 nm in diameter. In Aeromonas salmonicida, this protein is Aerolysin (ash3).